We begin with the raw amino-acid sequence, 70 residues long: MATNIVGKVKWYNSTKNFGFIEQDNGGKDVFVHKSAVDAAGLHSLEEGQDVIFDLEEKQGKAYAVNLRIK.

Residues 7–67 (GKVKWYNSTK…KQGKAYAVNL (61 aa)) enclose the CSD domain.

Its subcellular location is the cytoplasm. The polypeptide is Cold shock-like protein CspA (cspA) (Rickettsia conorii (strain ATCC VR-613 / Malish 7)).